Consider the following 288-residue polypeptide: Glycine--tRNA ligase alpha subunit (288 aa).

It belongs to the class-II aminoacyl-tRNA synthetase family. As to quaternary structure, tetramer of two alpha and two beta subunits.

It is found in the cytoplasm. It carries out the reaction tRNA(Gly) + glycine + ATP = glycyl-tRNA(Gly) + AMP + diphosphate. The protein is Glycine--tRNA ligase alpha subunit of Rickettsia peacockii (strain Rustic).